The sequence spans 126 residues: Putative 15 kDa capsid protein (126 aa).

It is found in the virion. The polypeptide is Putative 15 kDa capsid protein (P15) (Bombyx mori nuclear polyhedrosis virus (BmNPV)).